The following is a 330-amino-acid chain: Glucosyltransferase 3 (330 aa).

UDP is bound at residue Thr16. The tract at residues 106-111 is substrate protein-binding loop; that stretch reads MFSGNF. UDP-binding positions include Arg179, 211–214, and 244–249; these read YRPD and SYKLGS.

The protein belongs to the Gtf3 glucosyltransferase family. Homotetramer; a dimer of dimers. Requires In vitro glycosyltransferase activity is metal-independent. as cofactor.

It functions in the pathway protein modification; protein glycosylation. Required for polymorphic O-glycosylation of the serine-rich repeat protein Fap1. Catalyzes the second step in glycosylation of the serine-rich repeat protein in this bacteria. Transfers glucose from UDP-glucose to the terminal GlcNAc moiety of 3-O-(N-acetyl-alpha-D-glucosaminyl)-L-seryl-[protein] which results from the first glycosylation step of Fap1; does not use other sugar nucleotides as substrates. The sequence is that of Glucosyltransferase 3 from Streptococcus parasanguinis.